The following is a 1315-amino-acid chain: Claspin (1315 aa).

2 disordered regions span residues 22-276 (EAAD…AARL) and 345-474 (PADA…EQKT). Phosphoserine is present on residues serine 26, serine 42, serine 46, serine 53, serine 65, and serine 67. Residues 65-74 (SDSEAEDRDD) are compositionally biased toward acidic residues. Positions 91–101 (NLHSGKSQSRS) are enriched in polar residues. Acidic residues predominate over residues 108 to 118 (DSDESDMEETP). Phosphoserine is present on residues serine 109, serine 112, and serine 119. The segment covering 119–128 (SQESPETQEA) has biased composition (polar residues). Basic and acidic residues-rich tracts occupy residues 153–178 (LLREGAEGKAKSKRRLEKEERTMEKI) and 186–197 (TRCEESDADRPL). A coiled-coil region spans residues 159-187 (EGKAKSKRRLEKEERTMEKIRRLKKKETR). A compositionally biased stretch (acidic residues) spans 205–228 (EDSDLFETGLEEENDSALEDEESL). Serine 220 bears the Phosphoserine mark. Basic residues predominate over residues 235–245 (VKNKVKNRKKK). At serine 255 the chain carries Phosphoserine. 2 stretches are compositionally biased toward basic and acidic residues: residues 391–415 (ACGKDPVRRGELEIEETEKHSDDRP) and 455–470 (EELKTVEKTDAKEGMP). Residue serine 522 is modified to Phosphoserine. The stretch at 599-626 (EKLQMLKAKLQEAMKLRRLEERQKRQAL) forms a coiled coil. The disordered stretch occupies residues 625-691 (ALFKLDNEDG…SSDIGKSVAL (67 aa)). A compositionally biased stretch (acidic residues) spans 632 to 657 (EDGFEEEEEEEEMTDESEEDGEEETT). Positions 669 to 679 (KDEKETDKENT) are enriched in basic and acidic residues. 5 positions are modified to phosphoserine: serine 698, serine 701, serine 709, serine 722, and serine 740. The interval 713–750 (MGYFPTEEKSETDEYLAKQSDKLDEDDSSSLLTKESSH) is disordered. The span at 741-750 (SSLLTKESSH) shows a compositional bias: low complexity. Phosphoserine is present on residues serine 785, serine 787, serine 810, serine 816, and serine 823. Lysine 868 is modified (N6-acetyllysine). 2 CKB motif repeats span residues 887-896 (ELLDLCTGQF) and 917-926 (ELLNLCSGKF). Residue threonine 893 is modified to Phosphothreonine; by CHEK1. Disordered regions lie at residues 924–1002 (GKFP…NDEE) and 1032–1052 (EDEAEVSGSDVGSEDEYDGEE). The residue at position 932 (serine 932) is a Phosphoserine. Residues 954–963 (EALALCSGSF) form a CKB motif 3 repeat. The acidic patch stretch occupies residues 966 to 1063 (DREEEGEEEE…DEYEEDVIDE (98 aa)). Acidic residues-rich tracts occupy residues 967-977 (REEEGEEEEFG), 990-1002 (SDEDEHSDSNDEE), and 1043-1052 (GSEDEYDGEE). Serine 990, serine 996, and serine 998 each carry phosphoserine. Positions 1001-1036 (EELALDLEDDEEELLKQSEKMKRQMRLKKYLEDEAE) form a coiled coil. 2 positions are modified to phosphoserine: serine 1133 and serine 1265. The tract at residues 1264-1315 (LSPTKAEAAKDSSKPQVRRRGLSSMMSPSPKRLKTNGSSPGPKRSIFRYLES) is disordered.

It belongs to the claspin family. Interacts (phosphorylation-dependent) with CHEK1; regulates CLSPN function in checkpoint for DNA damage and replication. Interacts with ATR and RAD9A and these interactions are slightly reduced during checkpoint activation. Interacts with BRCA1 and this interaction increases during checkpoint activation. Interacts with TIMELESS; the interaction is required for leading-strand replication. Associates with the MCM2-7 complex and other replisome factors. Interacts (via the acidic patch) with CDC7; the interaction is required for phosphorylation of MCM proteins and CLASPIN by CDC7. Interacts with PCNA. Interacts with FZR1. In terms of processing, phosphorylated. Undergoes ATR-dependent phosphorylation by CHEK1 during activation of DNA replication or damage checkpoints. Phosphorylation by CSNK1G1/CK1 promotes CHEK1 binding. Phosphorylated by CDC7 during DNA replication, phosphorylation inhibits interaction between the acidic patch and N-terminal segments leading to increased binding to DNA and PCNA. Post-translationally, ubiquitinated by the anaphase promoting complex/cyclosome (APC/C) during G1 phase, leading to its degradation by the proteasome. Ubiquitination is mediated via its interaction with FZR1/CDH1. Following DNA damage, it is deubiquitinated by USP28 in G2 phase, preventing its degradation. Proteolytically cleaved by caspase-7 (CASP7) in response to apoptosis, leading to its inactivation.

It localises to the nucleus. Its function is as follows. Required for checkpoint mediated cell cycle arrest in response to inhibition of DNA replication or to DNA damage induced by both ionizing and UV irradiation. Adapter protein which binds to BRCA1 and the checkpoint kinase CHEK1 and facilitates the ATR-dependent phosphorylation of both proteins. Also required to maintain normal rates of replication fork progression during unperturbed DNA replication. Binds directly to DNA, with particular affinity for branched or forked molecules and interacts with multiple protein components of the replisome such as the MCM2-7 complex and TIMELESS. Important for initiation of DNA replication, recruits kinase CDC7 to phosphorylate MCM2-7 components. The sequence is that of Claspin (Clspn) from Mus musculus (Mouse).